The primary structure comprises 354 residues: Molybdenum import ATP-binding protein ModC (354 aa).

One can recognise an ABC transporter domain in the interval 1-229 (MLELDFEQQL…SALRLWLQKE (229 aa)). 31–38 (GLSGAGKT) is a binding site for ATP. A Mop domain is found at 289-354 (GSSIRNILAV…IKSVSFHRQL (66 aa)).

Belongs to the ABC transporter superfamily. Molybdate importer (TC 3.A.1.8) family. As to quaternary structure, the complex is composed of two ATP-binding proteins (ModC), two transmembrane proteins (ModB) and a solute-binding protein (ModA).

It localises to the cell inner membrane. It carries out the reaction molybdate(out) + ATP + H2O = molybdate(in) + ADP + phosphate + H(+). In terms of biological role, part of the ABC transporter complex ModABC involved in molybdenum import. Responsible for energy coupling to the transport system. This Photorhabdus laumondii subsp. laumondii (strain DSM 15139 / CIP 105565 / TT01) (Photorhabdus luminescens subsp. laumondii) protein is Molybdenum import ATP-binding protein ModC.